The chain runs to 251 residues: Probable transcriptional regulatory protein MMAR_2098 (251 aa).

The protein belongs to the TACO1 family.

The protein localises to the cytoplasm. This chain is Probable transcriptional regulatory protein MMAR_2098, found in Mycobacterium marinum (strain ATCC BAA-535 / M).